Consider the following 185-residue polypeptide: Dual specificity protein phosphatase 3 (185 aa).

One can recognise a Tyrosine-protein phosphatase domain in the interval 28 to 179 (QPCNEVTPRI…LCQLNDRLAK (152 aa)). The active-site Phosphocysteine intermediate is the cysteine 124.

Belongs to the protein-tyrosine phosphatase family. Non-receptor class dual specificity subfamily. As to quaternary structure, microtubule inner protein component of sperm flagellar doublet microtubules. Interacts with VRK3; this interaction activates DUSP3 phosphatase activity.

Its subcellular location is the nucleus. It is found in the cytoplasm. It localises to the cytoskeleton. The protein localises to the flagellum axoneme. It catalyses the reaction O-phospho-L-tyrosyl-[protein] + H2O = L-tyrosyl-[protein] + phosphate. The enzyme catalyses O-phospho-L-seryl-[protein] + H2O = L-seryl-[protein] + phosphate. It carries out the reaction O-phospho-L-threonyl-[protein] + H2O = L-threonyl-[protein] + phosphate. In terms of biological role, shows activity both for tyrosine-protein phosphate and serine-protein phosphate, but displays a strong preference toward phosphotyrosines. Specifically dephosphorylates and inactivates ERK1 and ERK2. The chain is Dual specificity protein phosphatase 3 (DUSP3) from Homo sapiens (Human).